Here is a 193-residue protein sequence, read N- to C-terminus: Secreted RxLR effector protein 126 (193 aa).

Residues 1-20 (MRYLLAVLIAAAFVISSGTS) form the signal peptide. The short motif at 50–64 (RMLQTKAVNGLEEER) is the RxLR-dEER element.

Belongs to the RxLR effector family.

The protein localises to the secreted. Its subcellular location is the host membrane. Functionally, secreted effector that completely suppresses the host cell death induced by cell death-inducing proteins. In Plasmopara viticola (Downy mildew of grapevine), this protein is Secreted RxLR effector protein 126.